The primary structure comprises 628 residues: Leucine-rich repeat and fibronectin type-III domain-containing protein 3 (628 aa).

The N-terminal stretch at 1 to 16 is a signal peptide; sequence MAILPLLLCLLPLAPA. The Extracellular segment spans residues 17–539; sequence SSPPQSATPS…PHAPFLGGTM (523 aa). Residues 19–59 enclose the LRRNT domain; the sequence is PPQSATPSPCPRRCRCQTQSLPLSVLCPGAGLLFVPPSLDR. 7 LRR repeats span residues 60–83, 84–105, 108–129, 132–153, 157–178, 181–202, and 205–226; these read RAAE…ANMT, GLLH…AFAD, ALRA…QLRG, NLRH…ALDD, TLED…ALGR, NVNT…AFSR, and KLAR…PLFS. A glycan (N-linked (GlcNAc...) asparagine) is linked at Asn81. The 47-residue stretch at 249 to 295 folds into the LRRCT domain; it reads NPLHCNCELVWLRRLAREDDLEACASPPALGGRYFWAVGEEEFVCEP. The 88-residue stretch at 295-382 folds into the Ig-like domain; the sequence is PPVVTHRSPP…GEATAAVELT (88 aa). Cys317 and Cys366 are oxidised to a cystine. Residues Asn339, Asn348, and Asn393 are each glycosylated (N-linked (GlcNAc...) asparagine). Positions 382-430 are disordered; that stretch reads TVGPPPPPQLANSTSCDPPRDGDPDALTPPSAASASAKVADTGPPTDRG. The segment covering 406–422 has biased composition (low complexity); that stretch reads DALTPPSAASASAKVAD. Residues 425–523 enclose the Fibronectin type-III domain; it reads PPTDRGVQVT…GCARFSTEPA (99 aa). The N-linked (GlcNAc...) asparagine glycan is linked to Asn462. Residues 540-560 form a helical membrane-spanning segment; the sequence is IIALGGVIVASVLVFIFVLLM. At 561-628 the chain is on the cytoplasmic side; it reads RYKVHGGQPP…WGPGHEPVGP (68 aa).

This sequence belongs to the LRFN family. As to quaternary structure, can form heteromeric complexes with LRFN1, LRFN2, LRFN4 and LRFN5. Able to form homomeric complexes across cell junctions, between adjacent cells. Does not interact with DLG4. In terms of processing, N-glycosylated.

It is found in the cell membrane. The protein localises to the cell projection. The protein resides in the axon. Its subcellular location is the dendrite. It localises to the synapse. It is found in the presynaptic cell membrane. The protein localises to the postsynaptic cell membrane. Functionally, cell adhesion molecule that mediates homophilic cell-cell adhesion in a Ca(2+)-independent manner. Promotes neurite outgrowth in hippocampal neurons. In Homo sapiens (Human), this protein is Leucine-rich repeat and fibronectin type-III domain-containing protein 3 (LRFN3).